The primary structure comprises 336 residues: Ketol-acid reductoisomerase (NADP(+)) (336 aa).

The KARI N-terminal Rossmann domain occupies 1-181 (MNVYYDKDCN…GGGRTGIIET (181 aa)). NADP(+) is bound by residues 24–27 (YGSQ), Arg47, Ser50, Ser52, and 82–85 (DEFQ). His107 is an active-site residue. Gly133 contacts NADP(+). The region spanning 182 to 327 (TFQDETETDL…GKLRSMMPWI (146 aa)) is the KARI C-terminal knotted domain. The Mg(2+) site is built by Asp190, Glu194, Glu226, and Glu230. Ser251 contacts substrate.

Belongs to the ketol-acid reductoisomerase family. Mg(2+) serves as cofactor.

It carries out the reaction (2R)-2,3-dihydroxy-3-methylbutanoate + NADP(+) = (2S)-2-acetolactate + NADPH + H(+). It catalyses the reaction (2R,3R)-2,3-dihydroxy-3-methylpentanoate + NADP(+) = (S)-2-ethyl-2-hydroxy-3-oxobutanoate + NADPH + H(+). The protein operates within amino-acid biosynthesis; L-isoleucine biosynthesis; L-isoleucine from 2-oxobutanoate: step 2/4. It participates in amino-acid biosynthesis; L-valine biosynthesis; L-valine from pyruvate: step 2/4. Its function is as follows. Involved in the biosynthesis of branched-chain amino acids (BCAA). Catalyzes an alkyl-migration followed by a ketol-acid reduction of (S)-2-acetolactate (S2AL) to yield (R)-2,3-dihydroxy-isovalerate. In the isomerase reaction, S2AL is rearranged via a Mg-dependent methyl migration to produce 3-hydroxy-3-methyl-2-ketobutyrate (HMKB). In the reductase reaction, this 2-ketoacid undergoes a metal-dependent reduction by NADPH to yield (R)-2,3-dihydroxy-isovalerate. The chain is Ketol-acid reductoisomerase (NADP(+)) from Geotalea daltonii (strain DSM 22248 / JCM 15807 / FRC-32) (Geobacter daltonii).